Consider the following 152-residue polypeptide: UPF0266 membrane protein PM0830 (152 aa).

3 consecutive transmembrane segments (helical) span residues 1-21 (MMIINVLLCLGIFCFLLYAFY), 45-65 (KDALIFSLLIGIIIYQTYTNL), and 66-86 (SSATLYLLTALILLSVYAAFI).

This sequence belongs to the UPF0266 family.

Its subcellular location is the cell inner membrane. The sequence is that of UPF0266 membrane protein PM0830 from Pasteurella multocida (strain Pm70).